Here is a 129-residue protein sequence, read N- to C-terminus: Lysozyme C (129 aa).

Residues 1-129 (KVFGRCELAA…VRVWIKGCRL (129 aa)) enclose the C-type lysozyme domain. Intrachain disulfides connect Cys6–Cys127, Cys30–Cys115, Cys64–Cys80, and Cys76–Cys94. Catalysis depends on residues Glu35 and Asp52.

Belongs to the glycosyl hydrolase 22 family. As to quaternary structure, monomer.

The protein localises to the secreted. The catalysed reaction is Hydrolysis of (1-&gt;4)-beta-linkages between N-acetylmuramic acid and N-acetyl-D-glucosamine residues in a peptidoglycan and between N-acetyl-D-glucosamine residues in chitodextrins.. Lysozymes have primarily a bacteriolytic function; those in tissues and body fluids are associated with the monocyte-macrophage system and enhance the activity of immunoagents. The sequence is that of Lysozyme C (LYZ) from Numida meleagris (Helmeted guineafowl).